We begin with the raw amino-acid sequence, 152 residues long: Large ribosomal subunit protein bL9 (152 aa).

This sequence belongs to the bacterial ribosomal protein bL9 family.

Its function is as follows. Binds to the 23S rRNA. The sequence is that of Large ribosomal subunit protein bL9 from Prochlorococcus marinus (strain SARG / CCMP1375 / SS120).